We begin with the raw amino-acid sequence, 271 residues long: TIP41-like protein (271 aa).

Lys-106 is modified (N6-acetyllysine). An interaction with PPP2CA region spans residues 173 to 271 (RVMPSSFFLL…PVDSESAPSE (99 aa)). 2 positions are modified to phosphoserine: Ser-265 and Ser-270.

It belongs to the TIP41 family. As to quaternary structure, interacts with PPP2CA. Interacts with PPP2CB, PPP4C and PPP6C. Interacts with IGBP1; the interaction is dependent on PPP2CA. Associates with a protein phosphatase 2A PP2A(C):IGBP1 complex. Interacts with PPP4C and PPP4R2.

The protein localises to the cytoplasm. Its function is as follows. May be a allosteric regulator of serine/threonine-protein phosphatase 2A (PP2A). Inhibits catalytic activity of the PP2A(D) core complex in vitro. The PP2A(C):TIPRL complex does not show phosphatase activity. Acts as a negative regulator of serine/threonine-protein phosphatase 4 probably by inhibiting the formation of the active PPP4C:PPP4R2 complex; the function is proposed to implicate it in DNA damage response by promoting H2AX phosphorylated on Ser-140 (gamma-H2AX). May play a role in the regulation of ATM/ATR signaling pathway controlling DNA replication and repair. The protein is TIP41-like protein (Tiprl) of Rattus norvegicus (Rat).